A 354-amino-acid chain; its full sequence is 4-hydroxy-3-methylbut-2-en-1-yl diphosphate synthase (flavodoxin) (354 aa).

Positions 265, 268, 300, and 307 each coordinate [4Fe-4S] cluster.

The protein belongs to the IspG family. Requires [4Fe-4S] cluster as cofactor.

It catalyses the reaction (2E)-4-hydroxy-3-methylbut-2-enyl diphosphate + oxidized [flavodoxin] + H2O + 2 H(+) = 2-C-methyl-D-erythritol 2,4-cyclic diphosphate + reduced [flavodoxin]. It functions in the pathway isoprenoid biosynthesis; isopentenyl diphosphate biosynthesis via DXP pathway; isopentenyl diphosphate from 1-deoxy-D-xylulose 5-phosphate: step 5/6. In terms of biological role, converts 2C-methyl-D-erythritol 2,4-cyclodiphosphate (ME-2,4cPP) into 1-hydroxy-2-methyl-2-(E)-butenyl 4-diphosphate. This is 4-hydroxy-3-methylbut-2-en-1-yl diphosphate synthase (flavodoxin) from Hydrogenobaculum sp. (strain Y04AAS1).